Reading from the N-terminus, the 211-residue chain is Large ribosomal subunit protein uL4 (211 aa).

Residues 44–90 form a disordered region; it reads ERQGTHSTLTKGEVRGGGKKPWRQKHTGKARTGSTRNPHWTGGGVVF. Residues 60-72 are compositionally biased toward basic residues; the sequence is GGKKPWRQKHTGK.

This sequence belongs to the universal ribosomal protein uL4 family. In terms of assembly, part of the 50S ribosomal subunit.

Functionally, one of the primary rRNA binding proteins, this protein initially binds near the 5'-end of the 23S rRNA. It is important during the early stages of 50S assembly. It makes multiple contacts with different domains of the 23S rRNA in the assembled 50S subunit and ribosome. Forms part of the polypeptide exit tunnel. The chain is Large ribosomal subunit protein uL4 from Ureaplasma parvum serovar 3 (strain ATCC 27815 / 27 / NCTC 11736).